We begin with the raw amino-acid sequence, 806 residues long: MSGWPRIYYKLLNLPLSVLVKSKSIPAEPALELGLDTSRPIMYVLPYNSKADLLTLRAQCLAHDLPDPLEPLEIDGTLLPRYVFIHGGPRVFTYYTPKEESIKLFHDYLDLHRSNPDLDVQMVPVSVMFGRRPGRQKGEENPPLRMLNGVQKFFAVSWLGRDSFVRFSPSVSLRHMADEHGTDKIIAQKLARVARMHFARQRLAAVGPRLPARQDLFNKLLASKAIARAVEDEARSKKISHEKAQQNAIALMEEIAANFSYEMIRLSDRILSFTWNRLYQGINVHNAERVRQLAHDGHEIVYVPCHRSHMDYLLLSYVLYHQGLVPPHIAAGINLNFWPAGPIFRRLGAFFIRRTFKGNKLYSTVFREYLGELFSRGYSVEYFVEGGRSRTGRLLDPKTGTLSMTIQAMLRGGTRPITLVPIYIGYEHVMEVGTYAKELRGATKEKESLPQMLRGLSKLRNLGQGYVNFGEPMPLMTYLNHHVPEWRESIDPIEAIRPAWLTPTVNNIAADLMVRINNAGAANAMNLCCTALLASRQRSLTREQLTEQLDCYLDMMRHVPYSTDSTVPSVTAGQLIDHALQMNKFEVEKDTIGDIIILPREQAVLMTYYRNNIAHMLMLPSLMAAIITQHRRISRQEILRHVEVLYPMLKAELFLRWSKDELAAELDKLTEELLRQGLIAVKGDELHINPSRSRTLQLLAAGARETLQRYAITFWLLSANPSINRGTLEKESRTLAQRLSVLHGINAPEFFDKAVFSSLVLTLRDEGYISDTGDAEPGETMKVYQMLAELITSDVRLTIESATQDE.

The HXXXXD motif signature appears at 305–310; that stretch reads CHRSHM.

This sequence belongs to the GPAT/DAPAT family.

It localises to the cell inner membrane. The enzyme catalyses sn-glycerol 3-phosphate + an acyl-CoA = a 1-acyl-sn-glycero-3-phosphate + CoA. It participates in phospholipid metabolism; CDP-diacylglycerol biosynthesis; CDP-diacylglycerol from sn-glycerol 3-phosphate: step 1/3. In Enterobacter sp. (strain 638), this protein is Glycerol-3-phosphate acyltransferase.